Here is a 443-residue protein sequence, read N- to C-terminus: Transcription factor E2F2 (443 aa).

Positions 1–22 (MLRAPRTLAPATAQPTKSLPAL) are disordered. The segment at 67–107 (ATPHGPEGQIVRCAPAGRLPAKRKLDLEGIGRPTVPEFRTP) is cyclin A/CDK2 binding. Residues 109 to 198 (GKCIRVDGLP…KNNIQWVGRE (90 aa)) mediate DNA binding. Residues 157–178 (LNWAAEVLDVQKRRIYDITNVL) are leucine-zipper. The DEF box motif lies at 162 to 198 (EVLDVQKRRIYDITNVLEGIQLIRKKSKNNIQWVGRE). A dimerization region spans residues 199–291 (LFEDPTRPSR…PDRAEENLQI (93 aa)). Residues 306 to 341 (PEEGQEPDSPAKEALPSTSALSPIPDCAQPGCSTDS) form a disordered region. Residues 361 to 443 (PPPPLPPAPS…SYDLGDLLIN (83 aa)) are transactivation. The retinoblastoma protein binding stretch occupies residues 416-433 (DEYLWGMDEGEGISDLFD).

It belongs to the E2F/DP family. In terms of assembly, component of the DRTF1/E2F transcription factor complex. Forms heterodimers with DP family members. The E2F2 complex binds specifically hypophosphorylated retinoblastoma protein RB1. During the cell cycle, RB1 becomes phosphorylated in mid-to-late G1 phase, detaches from the DRTF1/E2F complex, rendering E2F transcriptionally active. Viral oncoproteins, notably E1A, T-antigen and HPV E7, are capable of sequestering RB protein, thus releasing the active complex. Binds EAPP. In terms of processing, phosphorylated by CDK2 and cyclin A-CDK2 in the S-phase.

It localises to the nucleus. Transcription activator that binds DNA cooperatively with DP proteins through the E2 recognition site, 5'-TTTC[CG]CGC-3' found in the promoter region of a number of genes whose products are involved in cell cycle regulation or in DNA replication. The DRTF1/E2F complex functions in the control of cell-cycle progression from g1 to s phase. E2F2 binds specifically to RB1 in a cell-cycle dependent manner. This chain is Transcription factor E2F2 (E2f2), found in Mus musculus (Mouse).